Consider the following 35-residue polypeptide: Somatostatin (35 aa).

Cysteine 24 and cysteine 35 are joined by a disulfide.

The protein belongs to the somatostatin family.

The protein localises to the secreted. Functionally, somatostatin inhibits the release of somatotropin. The polypeptide is Somatostatin (sst) (Lampetra fluviatilis (European river lamprey)).